The chain runs to 122 residues: Large ribosomal subunit protein uL14 (122 aa).

It belongs to the universal ribosomal protein uL14 family. In terms of assembly, part of the 50S ribosomal subunit. Forms a cluster with proteins L3 and L19. In the 70S ribosome, L14 and L19 interact and together make contacts with the 16S rRNA in bridges B5 and B8.

Functionally, binds to 23S rRNA. Forms part of two intersubunit bridges in the 70S ribosome. The protein is Large ribosomal subunit protein uL14 of Stutzerimonas stutzeri (strain A1501) (Pseudomonas stutzeri).